Reading from the N-terminus, the 77-residue chain is Small ribosomal subunit protein uS17c (77 aa).

Belongs to the universal ribosomal protein uS17 family. In terms of assembly, part of the 30S ribosomal subunit.

The protein resides in the plastid. Its subcellular location is the chloroplast. In terms of biological role, one of the primary rRNA binding proteins, it binds specifically to the 5'-end of 16S ribosomal RNA. The protein is Small ribosomal subunit protein uS17c (rps17) of Cyanidium caldarium (Red alga).